Reading from the N-terminus, the 500-residue chain is DNA double-strand break repair helicase HerA (500 aa).

Residues Arg142, 151-156 (GSGKSN), and 459-460 (KI) each bind ATP.

The protein belongs to the HerA family. As to quaternary structure, homohexamer. Forms a complex with NurA.

The enzyme catalyses Couples ATP hydrolysis with the unwinding of duplex DNA at the replication fork by translocating in the 5'-3' direction. This creates two antiparallel DNA single strands (ssDNA). The leading ssDNA polymer is the template for DNA polymerase III holoenzyme which synthesizes a continuous strand.. It carries out the reaction ATP + H2O = ADP + phosphate + H(+). It catalyses the reaction Couples ATP hydrolysis with the unwinding of duplex DNA by translocating in the 3'-5' direction.. Its activity is regulated as follows. ATPase activity is stimulated in the presence of linear double-stranded (ds)DNA. Helicase activity requires the presence of NurA. LhrC-Core (Hel112) inhibits the exonuclease activity of the HerA-NurA complex on ss- and dsDNA, has no effect on the nicking activity of NurA. Involved in DNA double-strand break (DSB) repair. Probably acts with NurA to stimulate resection of the 5' strand and produce the long 3' single-strand that is required for RadA loading. NurA and HerA together stimulate the end-resection of six nucleotides of a linear DNA substrate. Has DNA-dependent ATPase activity and bidirectional DNA helicase activity. Preferentially binds single stranded (ss)DNA, bubble and semiforked DNA substrate over other DNA molecules tested. Stimulates the exo- but not endonuclease activity of NurA. This Saccharolobus solfataricus (strain ATCC 35092 / DSM 1617 / JCM 11322 / P2) (Sulfolobus solfataricus) protein is DNA double-strand break repair helicase HerA.